A 315-amino-acid polypeptide reads, in one-letter code: Ribosomal protein L11 methyltransferase (315 aa).

S-adenosyl-L-methionine contacts are provided by T164, G185, D207, and N249.

The protein belongs to the methyltransferase superfamily. PrmA family.

It is found in the cytoplasm. It carries out the reaction L-lysyl-[protein] + 3 S-adenosyl-L-methionine = N(6),N(6),N(6)-trimethyl-L-lysyl-[protein] + 3 S-adenosyl-L-homocysteine + 3 H(+). Functionally, methylates ribosomal protein L11. In Lactobacillus johnsonii (strain CNCM I-12250 / La1 / NCC 533), this protein is Ribosomal protein L11 methyltransferase.